The following is a 241-amino-acid chain: Venom nerve growth factor (241 aa).

The first 18 residues, 1–18 (MSMLCYTLIIAFLIGIWA), serve as a signal peptide directing secretion. The propeptide occupies 19–122 (APKSEDNVPL…SLNRNIRAKR (104 aa)). 3 disulfides stabilise this stretch: C136/C201, C179/C229, and C189/C231. N-linked (GlcNAc...) asparagine glycosylation occurs at N145.

It belongs to the NGF-beta family. As to quaternary structure, homodimer; non-covalently linked. In terms of tissue distribution, expressed by the venom gland.

It localises to the secreted. Nerve growth factor is important for the development and maintenance of the sympathetic and sensory nervous systems. It stimulates division and differentiation of sympathetic and embryonic sensory neurons as well as basal forebrain cholinergic neurons in the brain. Its relevance in the snake venom is not clear. However, it has been shown to inhibit metalloproteinase-dependent proteolysis of platelet glycoprotein Ib alpha, suggesting a metalloproteinase inhibition to prevent metalloprotease autodigestion and/or protection against prey proteases. Binds a lipid between the two protein chains in the homodimer. The lipid-bound form promotes histamine relase from mouse mast cells, contrary to the lipid-free form. This Crotalus durissus terrificus (South American rattlesnake) protein is Venom nerve growth factor.